The primary structure comprises 414 residues: Putative competence-damage inducible protein (414 aa).

This sequence belongs to the CinA family.

This Limosilactobacillus fermentum (strain NBRC 3956 / LMG 18251) (Lactobacillus fermentum) protein is Putative competence-damage inducible protein.